A 72-amino-acid chain; its full sequence is Prokaryotic ubiquitin-like protein Pup (72 aa).

Gly residues predominate over residues 1-10 (MATRDSGGGQ). A disordered region spans residues 1–41 (MATRDSGGGQQRADRRAEEIDDVATEDTSASDLKERHEKLS). A coiled-coil region spans residues 27-61 (DTSASDLKERHEKLSEDVDSLLDEIDDVLEENAEE). The segment at 28 to 66 (TSASDLKERHEKLSEDVDSLLDEIDDVLEENAEEFVKGY) is ARC ATPase binding. Positions 32–41 (DLKERHEKLS) are enriched in basic and acidic residues. Q72 carries the deamidated glutamine modification. Q72 participates in a covalent cross-link: Isoglutamyl lysine isopeptide (Gln-Lys) (interchain with K-? in acceptor proteins).

The protein belongs to the prokaryotic ubiquitin-like protein family. As to quaternary structure, strongly interacts with the proteasome-associated ATPase ARC through a hydrophobic interface; the interacting region of Pup lies in its C-terminal half. There is one Pup binding site per ARC hexamer ring. Is modified by deamidation of its C-terminal glutamine to glutamate by the deamidase Dop, a prerequisite to the subsequent pupylation process.

It participates in protein degradation; proteasomal Pup-dependent pathway. In terms of biological role, protein modifier that is covalently attached to lysine residues of substrate proteins, thereby targeting them for proteasomal degradation. The tagging system is termed pupylation. The sequence is that of Prokaryotic ubiquitin-like protein Pup from Frankia casuarinae (strain DSM 45818 / CECT 9043 / HFP020203 / CcI3).